We begin with the raw amino-acid sequence, 400 residues long: Phosphoglycerate kinase (400 aa).

Residues aspartate 24–asparagine 26, arginine 39, histidine 62–lysine 65, arginine 123, and arginine 156 each bind substrate. ATP-binding positions include lysine 207, glycine 298, glutamate 329, and glycine 356 to serine 359.

It belongs to the phosphoglycerate kinase family. As to quaternary structure, monomer.

The protein resides in the cytoplasm. It carries out the reaction (2R)-3-phosphoglycerate + ATP = (2R)-3-phospho-glyceroyl phosphate + ADP. Its pathway is carbohydrate degradation; glycolysis; pyruvate from D-glyceraldehyde 3-phosphate: step 2/5. The chain is Phosphoglycerate kinase from Clostridioides difficile (strain 630) (Peptoclostridium difficile).